The following is a 263-amino-acid chain: 3'-5' ssDNA/RNA exonuclease TatD (263 aa).

The a divalent metal cation site is built by glutamate 91, histidine 127, and histidine 152.

The protein belongs to the metallo-dependent hydrolases superfamily. TatD-type hydrolase family. TatD subfamily. As to quaternary structure, monomer. Requires Mg(2+) as cofactor.

It is found in the cytoplasm. Its function is as follows. 3'-5' exonuclease that prefers single-stranded DNA and RNA. May play a role in the H(2)O(2)-induced DNA damage repair. This Citrobacter rodentium (strain ICC168) (Citrobacter freundii biotype 4280) protein is 3'-5' ssDNA/RNA exonuclease TatD.